The primary structure comprises 716 residues: DEAD-box ATP-dependent RNA helicase 31 (716 aa).

The disordered stretch occupies residues 99–188 (GILKSDDEDE…LRLEDESSDE (90 aa)). Basic and acidic residues predominate over residues 110–121 (DRSRGRNQEKRG). Residues 144 to 153 (SRIQGKSSEA) are compositionally biased toward polar residues. The segment covering 155-188 (FRGRKETSFSRDREDEKGLRKREDLRLEDESSDE) has biased composition (basic and acidic residues). Residues 248–276 (TRFDHYPLSPLSLKAIKDAGYETMTVVQE) carry the Q motif motif. The region spanning 279-462 (LPIILKGKDV…LVALRRDHEF (184 aa)) is the Helicase ATP-binding domain. 292-299 (AKTGTGKT) lines the ATP pocket. A DEAD box motif is present at residues 410-413 (DEAD). The 147-residue stretch at 497–643 (LREHIMGNVD…IDPETVKKVQ (147 aa)) folds into the Helicase C-terminal domain.

The protein belongs to the DEAD box helicase family.

It carries out the reaction ATP + H2O = ADP + phosphate + H(+). In Arabidopsis thaliana (Mouse-ear cress), this protein is DEAD-box ATP-dependent RNA helicase 31 (RH31).